The following is a 406-amino-acid chain: Acetamidase (406 aa).

The segment covering 387-399 (CRPRSSTSTSPRR) has biased composition (low complexity). Positions 387–406 (CRPRSSTSTSPRRQGPAEGR) are disordered.

It belongs to the acetamidase/formamidase family.

It carries out the reaction a monocarboxylic acid amide + H2O = a monocarboxylate + NH4(+). It catalyses the reaction acetamide + H2O = acetate + NH4(+). In terms of biological role, allows acetamide to be used as a sole carbon or nitrogen source. The chain is Acetamidase (amdA) from Mycolicibacterium smegmatis (Mycobacterium smegmatis).